The primary structure comprises 496 residues: Probable cytosol aminopeptidase (496 aa).

Mn(2+)-binding residues include K252 and D257. The active site involves K264. 3 residues coordinate Mn(2+): D275, D334, and E336. R338 is an active-site residue.

Belongs to the peptidase M17 family. Mn(2+) serves as cofactor.

The protein localises to the cytoplasm. It carries out the reaction Release of an N-terminal amino acid, Xaa-|-Yaa-, in which Xaa is preferably Leu, but may be other amino acids including Pro although not Arg or Lys, and Yaa may be Pro. Amino acid amides and methyl esters are also readily hydrolyzed, but rates on arylamides are exceedingly low.. The catalysed reaction is Release of an N-terminal amino acid, preferentially leucine, but not glutamic or aspartic acids.. In terms of biological role, presumably involved in the processing and regular turnover of intracellular proteins. Catalyzes the removal of unsubstituted N-terminal amino acids from various peptides. This is Probable cytosol aminopeptidase from Leifsonia xyli subsp. xyli (strain CTCB07).